We begin with the raw amino-acid sequence, 628 residues long: (+)-alpha pinene synthase 1, chloroplastic (628 aa).

Residues Asp-379, Asp-383, and Asp-531 each coordinate Mg(2+). Positions 379–383 (DDIYD) match the DDXXD motif motif.

It belongs to the terpene synthase family. Tpsd subfamily. It depends on Mg(2+) as a cofactor. Mn(2+) is required as a cofactor.

It localises to the plastid. Its subcellular location is the chloroplast. It catalyses the reaction (2E)-geranyl diphosphate = (1R,5R)-alpha-pinene + diphosphate. Its pathway is terpene metabolism; oleoresin biosynthesis. The protein operates within secondary metabolite biosynthesis; terpenoid biosynthesis. Functionally, monoterpene synthase (TPS) involved in the biosynthesis of monoterpene natural products included in conifer oleoresin secretions and volatile emissions; these compounds contribute to biotic and abiotic stress defense against herbivores and pathogens. Catalyzes the conversion of (2E)-geranyl diphosphate (GPP) to (+)-alpha-pinene. The protein is (+)-alpha pinene synthase 1, chloroplastic of Pinus contorta (Shore pine).